The chain runs to 464 residues: Uronate isomerase (464 aa).

The protein belongs to the metallo-dependent hydrolases superfamily. Uronate isomerase family.

It carries out the reaction D-glucuronate = D-fructuronate. The catalysed reaction is aldehydo-D-galacturonate = keto-D-tagaturonate. It participates in carbohydrate metabolism; pentose and glucuronate interconversion. The chain is Uronate isomerase from Caldicellulosiruptor bescii (strain ATCC BAA-1888 / DSM 6725 / KCTC 15123 / Z-1320) (Anaerocellum thermophilum).